Consider the following 317-residue polypeptide: tRNA pseudouridine synthase B (317 aa).

Asp47 functions as the Nucleophile in the catalytic mechanism.

This sequence belongs to the pseudouridine synthase TruB family. Type 1 subfamily.

It carries out the reaction uridine(55) in tRNA = pseudouridine(55) in tRNA. In terms of biological role, responsible for synthesis of pseudouridine from uracil-55 in the psi GC loop of transfer RNAs. This is tRNA pseudouridine synthase B from Shewanella frigidimarina (strain NCIMB 400).